The primary structure comprises 307 residues: Nucleotide-binding protein Acid345_3782 (307 aa).

Residue 31–38 participates in ATP binding; it reads GLSGSGKA. 81–84 serves as a coordination point for GTP; that stretch reads DIRE.

The protein belongs to the RapZ-like family.

Displays ATPase and GTPase activities. This chain is Nucleotide-binding protein Acid345_3782, found in Koribacter versatilis (strain Ellin345).